The following is a 577-amino-acid chain: Arginine--tRNA ligase (577 aa).

A 'HIGH' region motif is present at residues 122 to 132 (PNVAKEMHVGH).

The protein belongs to the class-I aminoacyl-tRNA synthetase family. In terms of assembly, monomer.

The protein localises to the cytoplasm. It carries out the reaction tRNA(Arg) + L-arginine + ATP = L-arginyl-tRNA(Arg) + AMP + diphosphate. This chain is Arginine--tRNA ligase, found in Vibrio vulnificus (strain CMCP6).